Consider the following 23-residue polypeptide: Apolipophorin-3 (23 aa).

The protein belongs to the insect apolipophorin-3 family. As to quaternary structure, equilibrium between a soluble monomer and a bound lipoprotein form. Apolipophorin-3 associates with lipophorin during lipid loading until each particle contains 9 or 14 molecules of apolipophorin-3. In terms of tissue distribution, hemolymph.

Its subcellular location is the secreted. Assists in the loading of diacylglycerol, generated from triacylglycerol stores in the fat body through the action of adipokinetic hormone, into lipophorin, the hemolymph lipoprotein. It increases the lipid carrying capacity of lipophorin by covering the expanding hydrophobic surface resulting from diacylglycerol uptake. It thus plays a critical role in the transport of lipids during flight in several species of insects. This is Apolipophorin-3 from Melanoplus sanguinipes (Migratory grasshopper).